The chain runs to 207 residues: Ribosomal RNA small subunit methyltransferase G (207 aa).

S-adenosyl-L-methionine contacts are provided by residues glycine 76, glutamine 81, 127–128 (VE), and arginine 141.

Belongs to the methyltransferase superfamily. RNA methyltransferase RsmG family.

It is found in the cytoplasm. The catalysed reaction is guanosine(527) in 16S rRNA + S-adenosyl-L-methionine = N(7)-methylguanosine(527) in 16S rRNA + S-adenosyl-L-homocysteine. Functionally, specifically methylates the N7 position of guanine in position 527 of 16S rRNA. The chain is Ribosomal RNA small subunit methyltransferase G from Neisseria meningitidis serogroup A / serotype 4A (strain DSM 15465 / Z2491).